Reading from the N-terminus, the 103-residue chain is MVEVKQKTIKYKLIIDTRDDSITLEGTIEAIITVKESEIKYRDKQEKFMGNMQTITENEIQNEVTDVKGDIDETLNKRFERYVNVLKTLEKIAEMIGAEIEVN.

This is an uncharacterized protein from Sulfolobus islandicus filamentous virus (isolate Iceland/Hveragerdi) (SIFV).